The following is a 533-amino-acid chain: Acyl-CoA-binding domain-containing protein 5 (533 aa).

The 90-residue stretch at 42 to 131 folds into the ACB domain; sequence HETRFEAAVK…MKKILETMPM (90 aa). An acyl-CoA-binding positions include 53-62, 73-77, K99, and Y118; these read IQSLPKNGSF and YSFYK. Residues 182–227 are disordered; that stretch reads TPNAKTVNGKAESSDSGAESEEEAAQEDPKRPEPRDSDKKMMKKSA. Phosphoserine occurs at positions 194, 195, 197, and 201. Residues 208-227 are compositionally biased toward basic and acidic residues; it reads EDPKRPEPRDSDKKMMKKSA. Residues S244 and S314 each carry the phosphoserine modification. The disordered stretch occupies residues 339 to 443; the sequence is GGNPSQPLES…ERWGSDRGSR (105 aa). A compositionally biased stretch (basic and acidic residues) spans 374-383; that stretch reads GKGEVKRGGE. S429 bears the Phosphoserine mark. Residues 432 to 442 show a composition bias toward basic and acidic residues; the sequence is DGERWGSDRGS. A coiled-coil region spans residues 448-478; sequence EQIALVLMRLQEDMQNVLQRLHKLEMLAASQ. K470 is subject to N6-acetyllysine. A helical transmembrane segment spans residues 503–525; that stretch reads SPGALTFAIIWPFIAQWLVHLYY.

This sequence belongs to the ATG37 family. Highly expressed in brain and liver. Lower levels of expression in spleen and heart.

Its subcellular location is the peroxisome membrane. Functionally, acyl-CoA binding protein which acts as the peroxisome receptor for pexophagy but is dispensable for aggrephagy and nonselective autophagy. Binds medium- and long-chain acyl-CoA esters. This is Acyl-CoA-binding domain-containing protein 5 (ACBD5) from Bos taurus (Bovine).